A 291-amino-acid chain; its full sequence is Undecaprenyl-diphosphatase (291 aa).

The next 8 helical transmembrane spans lie at 1-21 (MFII…LTEF), 48-68 (SAFT…AWVF), 102-122 (LHVL…DDFI), 126-146 (LFSV…MIIA), 162-182 (INYF…WPGF), 203-223 (SDFT…LSLL), 231-251 (IADI…GLIA), and 267-287 (FAIY…GFGI).

It belongs to the UppP family.

It is found in the cell membrane. The catalysed reaction is di-trans,octa-cis-undecaprenyl diphosphate + H2O = di-trans,octa-cis-undecaprenyl phosphate + phosphate + H(+). Functionally, catalyzes the dephosphorylation of undecaprenyl diphosphate (UPP). Confers resistance to bacitracin. This chain is Undecaprenyl-diphosphatase, found in Staphylococcus aureus (strain bovine RF122 / ET3-1).